Reading from the N-terminus, the 470-residue chain is Uronate isomerase (470 aa).

This sequence belongs to the metallo-dependent hydrolases superfamily. Uronate isomerase family.

It catalyses the reaction D-glucuronate = D-fructuronate. The enzyme catalyses aldehydo-D-galacturonate = keto-D-tagaturonate. It functions in the pathway carbohydrate metabolism; pentose and glucuronate interconversion. This Vibrio vulnificus (strain YJ016) protein is Uronate isomerase.